The sequence spans 59 residues: Dendroaspin (59 aa).

4 disulfides stabilise this stretch: Cys-3-Cys-22, Cys-17-Cys-37, Cys-39-Cys-51, and Cys-52-Cys-57. Positions 43–45 (RGD) match the Cell attachment site motif.

It belongs to the three-finger toxin family. Short-chain subfamily. Antiplatelet toxin sub-subfamily. Expressed by the venom gland.

It localises to the secreted. Functionally, inhibits ADP-induced platelet aggregation and inhibits the binding of purified platelet fibrinogen receptor alpha-IIb/beta-3 (ITGA2B/ITGB3) to immobilized fibrinogen. Has also been described to inhibit cell adhesion to fibrinogen, fibronectin, laminin and collagen. This chain is Dendroaspin, found in Dendroaspis jamesoni kaimosae (Eastern Jameson's mamba).